The following is a 454-amino-acid chain: Exopolyphosphatase PRUNE1 (454 aa).

The residue at position 1 (Met1) is an N-acetylmethionine. Positions 28, 30, 106, and 179 each coordinate Mn(2+). The DHH motif motif lies at 106 to 108 (DHH). Residues 394–421 (SLISGLSQDEEDPPLPPTPMNSLVDECP) are essential for homodimerization. The interval 397-420 (SGLSQDEEDPPLPPTPMNSLVDEC) is disordered. At Ser400 the chain carries Phosphoserine. Position 411 is a phosphothreonine (Thr411). Phosphoserine is present on Ser415.

Belongs to the PPase class C family. Prune subfamily. Homooligomer. Able to homodimerize via its C-terminal domain. Interacts with NME1. Interacts with GSK3; at focal adhesion complexes where paxillin and vinculin are colocalized. Interacts with alpha and beta tubulin. It depends on Mn(2+) as a cofactor.

The protein localises to the cytoplasm. It is found in the nucleus. The protein resides in the cell junction. Its subcellular location is the focal adhesion. The enzyme catalyses diphosphate + H2O = 2 phosphate + H(+). With respect to regulation, activated by magnesium ions and inhibited by manganese ions. Inhibited by dipyridamole, moderately sensitive to IBMX and inhibited by vinpocetine. Its function is as follows. Phosphodiesterase (PDE) that has higher activity toward cAMP than cGMP, as substrate. Plays a role in cell proliferation, migration and differentiation, and acts as a negative regulator of NME1. Plays a role in the regulation of neurogenesis. Involved in the regulation of microtubule polymerization. The chain is Exopolyphosphatase PRUNE1 (Prune1) from Mus musculus (Mouse).